The following is a 406-amino-acid chain: tRNA-specific 2-thiouridylase MnmA (406 aa).

Residues 6–13 and Leu32 contribute to the ATP site; that span reads AMSGGVDS. Residue Cys101 is the Nucleophile of the active site. Cys101 and Cys193 form a disulfide bridge. Gly125 is an ATP binding site. The tract at residues 143-145 is interaction with tRNA; that stretch reads KDQ. Residue Cys193 is the Cysteine persulfide intermediate of the active site. A disordered region spans residues 378–406; that stretch reads GAPIEEQPAPGTVGAVDADAIEQGEDAQR. Positions 396-406 are enriched in acidic residues; that stretch reads DAIEQGEDAQR.

The protein belongs to the MnmA/TRMU family.

It localises to the cytoplasm. The enzyme catalyses S-sulfanyl-L-cysteinyl-[protein] + uridine(34) in tRNA + AH2 + ATP = 2-thiouridine(34) in tRNA + L-cysteinyl-[protein] + A + AMP + diphosphate + H(+). Functionally, catalyzes the 2-thiolation of uridine at the wobble position (U34) of tRNA, leading to the formation of s(2)U34. The protein is tRNA-specific 2-thiouridylase MnmA of Corynebacterium urealyticum (strain ATCC 43042 / DSM 7109).